The following is a 461-amino-acid chain: UDP-N-acetylmuramate--L-alanine ligase (461 aa).

ATP is bound at residue 112–118; sequence GTHGKTT.

Belongs to the MurCDEF family.

It is found in the cytoplasm. The enzyme catalyses UDP-N-acetyl-alpha-D-muramate + L-alanine + ATP = UDP-N-acetyl-alpha-D-muramoyl-L-alanine + ADP + phosphate + H(+). Its pathway is cell wall biogenesis; peptidoglycan biosynthesis. In terms of biological role, cell wall formation. The sequence is that of UDP-N-acetylmuramate--L-alanine ligase from Hydrogenovibrio crunogenus (strain DSM 25203 / XCL-2) (Thiomicrospira crunogena).